The chain runs to 447 residues: GTPase Der (447 aa).

EngA-type G domains follow at residues 3 to 167 (PVIA…FAER) and 181 to 354 (TRIA…AAAM). Residues 9–16 (GRPNVGKS), 56–60 (DTGGF), 119–122 (NKAE), 187–194 (GRPNVGKS), 234–238 (DTAGL), and 299–302 (NKWD) each bind GTP. The KH-like domain maps to 355–439 (VKLPTPKLTR…PLRIEFRTNK (85 aa)).

This sequence belongs to the TRAFAC class TrmE-Era-EngA-EngB-Septin-like GTPase superfamily. EngA (Der) GTPase family. As to quaternary structure, associates with the 50S ribosomal subunit.

In terms of biological role, GTPase that plays an essential role in the late steps of ribosome biogenesis. This Ralstonia nicotianae (strain ATCC BAA-1114 / GMI1000) (Ralstonia solanacearum) protein is GTPase Der.